The chain runs to 72 residues: Translation initiation factor IF-1 (72 aa).

The region spanning 2–72 (AKEDVIEVEG…TRGRITYRYK (71 aa)) is the S1-like domain. Phosphotyrosine is present on tyrosine 60.

It belongs to the IF-1 family. In terms of assembly, component of the 30S ribosomal translation pre-initiation complex which assembles on the 30S ribosome in the order IF-2 and IF-3, IF-1 and N-formylmethionyl-tRNA(fMet); mRNA recruitment can occur at any time during PIC assembly.

It is found in the cytoplasm. In terms of biological role, one of the essential components for the initiation of protein synthesis. Stabilizes the binding of IF-2 and IF-3 on the 30S subunit to which N-formylmethionyl-tRNA(fMet) subsequently binds. Helps modulate mRNA selection, yielding the 30S pre-initiation complex (PIC). Upon addition of the 50S ribosomal subunit IF-1, IF-2 and IF-3 are released leaving the mature 70S translation initiation complex. This Halalkalibacterium halodurans (strain ATCC BAA-125 / DSM 18197 / FERM 7344 / JCM 9153 / C-125) (Bacillus halodurans) protein is Translation initiation factor IF-1.